Reading from the N-terminus, the 402-residue chain is 3-dehydroquinate synthase (402 aa).

The protein belongs to the archaeal-type DHQ synthase family.

The enzyme catalyses 2-amino-2,3,7-trideoxy-D-lyxo-hept-6-ulosonate + NAD(+) + H2O = 3-dehydroquinate + NH4(+) + NADH + H(+). Catalyzes the oxidative deamination and cyclization of 2-amino-3,7-dideoxy-D-threo-hept-6-ulosonic acid (ADH) to yield 3-dehydroquinate (DHQ), which is fed into the canonical shikimic pathway of aromatic amino acid biosynthesis. In Methanopyrus kandleri (strain AV19 / DSM 6324 / JCM 9639 / NBRC 100938), this protein is 3-dehydroquinate synthase.